A 323-amino-acid polypeptide reads, in one-letter code: Beta-ketoacyl-[acyl-carrier-protein] synthase III (323 aa).

Active-site residues include Cys-113 and His-250. Residues 251-255 (QANKR) are ACP-binding. Residue Asn-280 is part of the active site.

Belongs to the thiolase-like superfamily. FabH family. In terms of assembly, homodimer.

It localises to the cytoplasm. The catalysed reaction is malonyl-[ACP] + acetyl-CoA + H(+) = 3-oxobutanoyl-[ACP] + CO2 + CoA. Its pathway is lipid metabolism; fatty acid biosynthesis. In terms of biological role, catalyzes the condensation reaction of fatty acid synthesis by the addition to an acyl acceptor of two carbons from malonyl-ACP. Catalyzes the first condensation reaction which initiates fatty acid synthesis and may therefore play a role in governing the total rate of fatty acid production. Possesses both acetoacetyl-ACP synthase and acetyl transacylase activities. Its substrate specificity determines the biosynthesis of branched-chain and/or straight-chain of fatty acids. The sequence is that of Beta-ketoacyl-[acyl-carrier-protein] synthase III from Brucella anthropi (strain ATCC 49188 / DSM 6882 / CCUG 24695 / JCM 21032 / LMG 3331 / NBRC 15819 / NCTC 12168 / Alc 37) (Ochrobactrum anthropi).